A 475-amino-acid polypeptide reads, in one-letter code: Ribulose bisphosphate carboxylase large chain (475 aa).

Residues 1-2 constitute a propeptide that is removed on maturation; sequence MS. Proline 3 bears the N-acetylproline mark. Residue lysine 14 is modified to N6,N6,N6-trimethyllysine. Substrate-binding residues include asparagine 123 and threonine 173. Lysine 175 acts as the Proton acceptor in catalysis. Residue lysine 177 participates in substrate binding. Residues lysine 201, aspartate 203, and glutamate 204 each coordinate Mg(2+). Lysine 201 carries the N6-carboxylysine modification. The Proton acceptor role is filled by histidine 294. The substrate site is built by arginine 295, histidine 327, and serine 379.

This sequence belongs to the RuBisCO large chain family. Type I subfamily. As to quaternary structure, heterohexadecamer of 8 large chains and 8 small chains; disulfide-linked. The disulfide link is formed within the large subunit homodimers. Mg(2+) serves as cofactor. In terms of processing, the disulfide bond which can form in the large chain dimeric partners within the hexadecamer appears to be associated with oxidative stress and protein turnover.

Its subcellular location is the plastid. The protein resides in the chloroplast. It carries out the reaction 2 (2R)-3-phosphoglycerate + 2 H(+) = D-ribulose 1,5-bisphosphate + CO2 + H2O. The enzyme catalyses D-ribulose 1,5-bisphosphate + O2 = 2-phosphoglycolate + (2R)-3-phosphoglycerate + 2 H(+). Functionally, ruBisCO catalyzes two reactions: the carboxylation of D-ribulose 1,5-bisphosphate, the primary event in carbon dioxide fixation, as well as the oxidative fragmentation of the pentose substrate in the photorespiration process. Both reactions occur simultaneously and in competition at the same active site. The protein is Ribulose bisphosphate carboxylase large chain of Citrus sinensis (Sweet orange).